The chain runs to 153 residues: MRLNTIKPGMGSTKPRRRVGRGIGSGLGKTCGRGHKGQKSRAGGFHKIGFEGGQMPLQRRLPKRGFVVYGKKQIQEIKLSSLLLIDRNEFDTSVLHEFNLIKSINYPVKIIADAQACTRAIRLKDLRVTRGVKDIVEHAGGQVELTIEDVNGI.

Positions 1–42 (MRLNTIKPGMGSTKPRRRVGRGIGSGLGKTCGRGHKGQKSRA) are disordered. Residues 21-31 (RGIGSGLGKTC) show a composition bias toward gly residues.

This sequence belongs to the universal ribosomal protein uL15 family. In terms of assembly, part of the 50S ribosomal subunit.

In terms of biological role, binds to the 23S rRNA. This is Large ribosomal subunit protein uL15 from Nitrosomonas eutropha (strain DSM 101675 / C91 / Nm57).